We begin with the raw amino-acid sequence, 84 residues long: Anaphase-promoting complex subunit 11 (84 aa).

Zn(2+) contacts are provided by Cys23, Cys26, Cys34, Cys37, Cys44, Cys51, His53, His56, His58, Cys59, Cys73, and Cys76. The RING-type zinc-finger motif lies at 34-77 (CPDCKVPGDDCPLVWGQCSHCFHMHCILKWLNAQQVQQHCPMCR).

The protein belongs to the RING-box family. In terms of assembly, the mammalian APC/C is composed at least of 14 distinct subunits ANAPC1, ANAPC2, CDC27/APC3, ANAPC4, ANAPC5, CDC16/APC6, ANAPC7, CDC23/APC8, ANAPC10, ANAPC11, CDC26/APC12, ANAPC13, ANAPC15 and ANAPC16 that assemble into a complex of at least 19 chains with a combined molecular mass of around 1.2 MDa; APC/C interacts with FZR1 and FBXO5. Interacts with the cullin domain of ANAPC2. Interacts with UBE2D2. Post-translationally, auto-ubiquitinated.

The protein localises to the cytoplasm. It is found in the nucleus. It functions in the pathway protein modification; protein ubiquitination. Together with the cullin protein ANAPC2, constitutes the catalytic component of the anaphase promoting complex/cyclosome (APC/C), a cell cycle-regulated E3 ubiquitin ligase that controls progression through mitosis and the G1 phase of the cell cycle. The APC/C complex acts by mediating ubiquitination and subsequent degradation of target proteins: it mainly mediates the formation of 'Lys-11'-linked polyubiquitin chains and, to a lower extent, the formation of 'Lys-48'- and 'Lys-63'-linked polyubiquitin chains. The APC/C complex catalyzes assembly of branched 'Lys-11'-/'Lys-48'-linked branched ubiquitin chains on target proteins. May recruit the E2 ubiquitin-conjugating enzymes to the complex. This is Anaphase-promoting complex subunit 11 (Anapc11) from Mus musculus (Mouse).